We begin with the raw amino-acid sequence, 297 residues long: 33 kDa chaperonin (297 aa).

Intrachain disulfides connect Cys-239/Cys-241 and Cys-272/Cys-275.

It belongs to the HSP33 family. Post-translationally, under oxidizing conditions two disulfide bonds are formed involving the reactive cysteines. Under reducing conditions zinc is bound to the reactive cysteines and the protein is inactive.

It is found in the cytoplasm. In terms of biological role, redox regulated molecular chaperone. Protects both thermally unfolding and oxidatively damaged proteins from irreversible aggregation. Plays an important role in the bacterial defense system toward oxidative stress. This is 33 kDa chaperonin from Clostridium acetobutylicum (strain ATCC 824 / DSM 792 / JCM 1419 / IAM 19013 / LMG 5710 / NBRC 13948 / NRRL B-527 / VKM B-1787 / 2291 / W).